Consider the following 300-residue polypeptide: F-box protein PP2-A15 (300 aa).

The F-box domain maps to 17-63; it reads MGPGLGDIPESCVACVFMYLTPPEICNLAGLNRSFRGAASSDSVWEK.

This is F-box protein PP2-A15 (PP2A15) from Arabidopsis thaliana (Mouse-ear cress).